The chain runs to 296 residues: GTPase Era (296 aa).

The 168-residue stretch at 7–174 folds into the Era-type G domain; that stretch reads HCGFVAIVGR…LDQVRPHLPE (168 aa). A G1 region spans residues 15–22; sequence GRPNVGKS. 15–22 serves as a coordination point for GTP; that stretch reads GRPNVGKS. Positions 41–45 are G2; it reads QTTRH. The segment at 62–65 is G3; the sequence is DTPG. Residues 62-66 and 123-126 contribute to the GTP site; these read DTPGF and NKLD. The interval 123–126 is G4; it reads NKLD. The segment at 153-155 is G5; the sequence is VSA. The region spanning 205–281 is the KH type-2 domain; it reads LGEELPYEMN…FLQVWVKVKS (77 aa).

The protein belongs to the TRAFAC class TrmE-Era-EngA-EngB-Septin-like GTPase superfamily. Era GTPase family. As to quaternary structure, monomer.

The protein localises to the cytoplasm. It localises to the cell inner membrane. Functionally, an essential GTPase that binds both GDP and GTP, with rapid nucleotide exchange. Plays a role in 16S rRNA processing and 30S ribosomal subunit biogenesis and possibly also in cell cycle regulation and energy metabolism. The sequence is that of GTPase Era from Chromobacterium violaceum (strain ATCC 12472 / DSM 30191 / JCM 1249 / CCUG 213 / NBRC 12614 / NCIMB 9131 / NCTC 9757 / MK).